We begin with the raw amino-acid sequence, 359 residues long: Flavonoid 8-O-methyltransferase 1 (359 aa).

Asp-223 is an S-adenosyl-L-methionine binding site. The active-site Proton acceptor is the His-261.

This sequence belongs to the class I-like SAM-binding methyltransferase superfamily. Cation-independent O-methyltransferase family. As to expression, expressed in leaves and trichomes, especially in cv. SD and cv. EMX-1, but barely in cv. MC and cv. SW.

It catalyses the reaction an 8-hydroxyflavone + S-adenosyl-L-methionine = an 8-methoxyflavone + S-adenosyl-L-homocysteine + H(+). The enzyme catalyses 4',7,8-trihydroxyflavone + S-adenosyl-L-methionine = 4',7-dihydroxy-8-methoxyflavone + S-adenosyl-L-homocysteine + H(+). It carries out the reaction 7,8-dihydroxyflavone + S-adenosyl-L-methionine = 7-hydroxy-8-methoxyflavone + S-adenosyl-L-homocysteine + H(+). The catalysed reaction is 3',4',7,8-tetrahydroxyflavone + S-adenosyl-L-methionine = 3',4,7-trihydroxy-8-methoxyflavone + S-adenosyl-L-homocysteine + H(+). It participates in flavonoid metabolism. With respect to regulation, strongly inhibited by gardenin B (GARD B). In terms of biological role, cation-independent flavonoid 8-O-methyltransferase involved in the biosynthesis of polymethoxylated flavonoids natural products such as nevadensin and salvigenin, aroma compounds which contribute to the flavor of sweet basil, and exhibit pharmacological activities such as anti-allergic, anti-oxidant, antibacterial, anti-proliferative, and anti-inflammatory effects. Catalyzes S-adenosylmethionine-dependent regioselective 8-O-methylation of flavonoids; mediates likely the conversion of pilosin (PIL) to nevadensin (NEV) and of 8-hydroxysalvigenin (8-OH-SALV) to gardenin B (GARD B). Can also use 3',4',7,8-tetrahydroxyflavone as substrate. Accepts other unnatural O-diphenols including 7,8,4'-trihydroxy-flavone and 7-O-methyl-8-hydroxy-flavone, and, with a lower efficiency, 7,8-dihydroxy-flavone, as substrates. This chain is Flavonoid 8-O-methyltransferase 1, found in Ocimum basilicum (Sweet basil).